We begin with the raw amino-acid sequence, 103 residues long: Salivary thrombin inhibitor anophelin (103 aa).

Residues 1 to 21 (MASKLFVLAFLCLALVVVVQS) form the signal peptide. The tract at residues 24-103 (QYARGDVPTY…PAASSSESDE (80 aa)) is disordered. A blocks exosite I of host thrombin region spans residues 56 to 68 (EEFDPSLLEEHAD). The blocks active site cleft of host thrombin in a reverse direction compared to substrates stretch occupies residues 74–77 (DPGR). The span at 91 to 103 (ASAPAASSSESDE) shows a compositional bias: low complexity.

Belongs to the anophelin family. As to quaternary structure, interacts with human F2 (thrombin); the interaction results in thrombin inhibition. Female salivary gland (at protein level). Not detected in female midgut, head, carcass and male tissues (at protein level).

The protein resides in the secreted. Increasing concentration of NaCl decreases affinity for thrombin. Its function is as follows. Salivary protein with anticoagulant activity that inhibits host thrombin (F2); binds to the proteinase in a reverse orientation (opposite to substrates). This chain is Salivary thrombin inhibitor anophelin, found in Anopheles gambiae (African malaria mosquito).